The chain runs to 414 residues: Multifunctional CCA protein (414 aa).

ATP is bound by residues Gly8 and Arg11. 2 residues coordinate CTP: Gly8 and Arg11. Mg(2+)-binding residues include Asp21 and Asp23. The ATP site is built by Arg91, Arg137, and Arg140. Arg91, Arg137, and Arg140 together coordinate CTP. One can recognise an HD domain in the interval 228–329; that stretch reads TGIHTLMVLE…VKLFDKGDFW (102 aa).

The protein belongs to the tRNA nucleotidyltransferase/poly(A) polymerase family. Bacterial CCA-adding enzyme type 1 subfamily. As to quaternary structure, monomer. Can also form homodimers and oligomers. Requires Mg(2+) as cofactor. It depends on Ni(2+) as a cofactor.

The enzyme catalyses a tRNA precursor + 2 CTP + ATP = a tRNA with a 3' CCA end + 3 diphosphate. The catalysed reaction is a tRNA with a 3' CCA end + 2 CTP + ATP = a tRNA with a 3' CCACCA end + 3 diphosphate. In terms of biological role, catalyzes the addition and repair of the essential 3'-terminal CCA sequence in tRNAs without using a nucleic acid template. Adds these three nucleotides in the order of C, C, and A to the tRNA nucleotide-73, using CTP and ATP as substrates and producing inorganic pyrophosphate. tRNA 3'-terminal CCA addition is required both for tRNA processing and repair. Also involved in tRNA surveillance by mediating tandem CCA addition to generate a CCACCA at the 3' terminus of unstable tRNAs. While stable tRNAs receive only 3'-terminal CCA, unstable tRNAs are marked with CCACCA and rapidly degraded. The chain is Multifunctional CCA protein from Shewanella frigidimarina (strain NCIMB 400).